The following is a 378-amino-acid chain: Succinyl-diaminopimelate desuccinylase (378 aa).

A Zn(2+)-binding site is contributed by H67. Residue D69 is part of the active site. D100 contributes to the Zn(2+) binding site. Residue E134 is the Proton acceptor of the active site. E135, E163, and H349 together coordinate Zn(2+).

This sequence belongs to the peptidase M20A family. DapE subfamily. As to quaternary structure, homodimer. Zn(2+) is required as a cofactor. Co(2+) serves as cofactor.

The catalysed reaction is N-succinyl-(2S,6S)-2,6-diaminopimelate + H2O = (2S,6S)-2,6-diaminopimelate + succinate. The protein operates within amino-acid biosynthesis; L-lysine biosynthesis via DAP pathway; LL-2,6-diaminopimelate from (S)-tetrahydrodipicolinate (succinylase route): step 3/3. Catalyzes the hydrolysis of N-succinyl-L,L-diaminopimelic acid (SDAP), forming succinate and LL-2,6-diaminopimelate (DAP), an intermediate involved in the bacterial biosynthesis of lysine and meso-diaminopimelic acid, an essential component of bacterial cell walls. The polypeptide is Succinyl-diaminopimelate desuccinylase (Nitrosomonas eutropha (strain DSM 101675 / C91 / Nm57)).